A 114-amino-acid chain; its full sequence is uncharacterized protein (114 aa).

Residues 90-114 (VESSQKRKPEESTIGMDAPKKMKRG) form a disordered region.

This is an uncharacterized protein from Caenorhabditis elegans.